A 147-amino-acid polypeptide reads, in one-letter code: Phosphoribosyl-AMP cyclohydrolase (147 aa).

D91 lines the Mg(2+) pocket. C92 lines the Zn(2+) pocket. D93 and D95 together coordinate Mg(2+). Zn(2+) is bound by residues C109 and C116.

The protein belongs to the PRA-CH family. As to quaternary structure, homodimer. Mg(2+) serves as cofactor. It depends on Zn(2+) as a cofactor.

Its subcellular location is the cytoplasm. It carries out the reaction 1-(5-phospho-beta-D-ribosyl)-5'-AMP + H2O = 1-(5-phospho-beta-D-ribosyl)-5-[(5-phospho-beta-D-ribosylamino)methylideneamino]imidazole-4-carboxamide. It participates in amino-acid biosynthesis; L-histidine biosynthesis; L-histidine from 5-phospho-alpha-D-ribose 1-diphosphate: step 3/9. Functionally, catalyzes the hydrolysis of the adenine ring of phosphoribosyl-AMP. The sequence is that of Phosphoribosyl-AMP cyclohydrolase from Rhodopseudomonas palustris (strain BisB18).